We begin with the raw amino-acid sequence, 182 residues long: ATP-dependent protease subunit HslV (182 aa).

Thr-9 is an active-site residue. 3 residues coordinate Na(+): Ala-167, Cys-170, and Thr-173.

Belongs to the peptidase T1B family. HslV subfamily. In terms of assembly, a double ring-shaped homohexamer of HslV is capped on each side by a ring-shaped HslU homohexamer. The assembly of the HslU/HslV complex is dependent on binding of ATP.

It is found in the cytoplasm. It carries out the reaction ATP-dependent cleavage of peptide bonds with broad specificity.. Allosterically activated by HslU binding. Its function is as follows. Protease subunit of a proteasome-like degradation complex believed to be a general protein degrading machinery. This is ATP-dependent protease subunit HslV from Enterococcus faecalis (strain ATCC 700802 / V583).